A 306-amino-acid chain; its full sequence is 4-hydroxybenzoate geranyltransferase 2 (306 aa).

Transmembrane regions (helical) follow at residues 38 to 58 (IGSW…ADLG), 61 to 81 (PKML…GCTI), 119 to 139 (LFIG…LAIV), 153 to 173 (ITYW…LLGS), 178 to 198 (GSVV…WTLV), 229 to 249 (IWIT…GFIV), 251 to 271 (IGLP…WQIF), and 285 to 305 (FVSN…GRLF).

The protein belongs to the UbiA prenyltransferase family. Requires Mg(2+) as cofactor. Expressed only in roots.

Its subcellular location is the endoplasmic reticulum membrane. It catalyses the reaction 4-hydroxybenzoate + (2E)-geranyl diphosphate = 3-geranyl-4-hydroxybenzoate + diphosphate. Prenyltransferase involved in the biosynthesis of shikonin, a naphthoquinone secondary metabolite. Could accept only geranyl diphosphate and not dimethylallyl diphosphate, farnesyl diphosphate, or geranylgeranyl diphosphate as substrate. The sequence is that of 4-hydroxybenzoate geranyltransferase 2 (PGT-2) from Lithospermum erythrorhizon (Purple gromwell).